Consider the following 315-residue polypeptide: Methionyl-tRNA formyltransferase (315 aa).

Position 113 to 116 (113 to 116) interacts with (6S)-5,6,7,8-tetrahydrofolate; sequence SLLP.

This sequence belongs to the Fmt family.

It carries out the reaction L-methionyl-tRNA(fMet) + (6R)-10-formyltetrahydrofolate = N-formyl-L-methionyl-tRNA(fMet) + (6S)-5,6,7,8-tetrahydrofolate + H(+). Attaches a formyl group to the free amino group of methionyl-tRNA(fMet). The formyl group appears to play a dual role in the initiator identity of N-formylmethionyl-tRNA by promoting its recognition by IF2 and preventing the misappropriation of this tRNA by the elongation apparatus. The sequence is that of Methionyl-tRNA formyltransferase from Escherichia coli O6:K15:H31 (strain 536 / UPEC).